Consider the following 424-residue polypeptide: GTPase Obg (424 aa).

Residues 1 to 160 (MFDRVEIRIK…YELILELKLI (160 aa)) form the Obg domain. One can recognise an OBG-type G domain in the interval 161 to 328 (ADVAIIGYPN…LLDKVAEKLA (168 aa)). GTP-binding positions include 167–174 (GYPNVGKS), 192–196 (FTTLS), 213–216 (EVPG), 280–283 (NKID), and 309–311 (SAL). Ser174 and Thr194 together coordinate Mg(2+). The OCT domain maps to 349–424 (PAPKGKMGFH…IITGRLEWYL (76 aa)).

Belongs to the TRAFAC class OBG-HflX-like GTPase superfamily. OBG GTPase family. Monomer. Requires Mg(2+) as cofactor.

It is found in the cytoplasm. Its function is as follows. An essential GTPase which binds GTP, GDP and possibly (p)ppGpp with moderate affinity, with high nucleotide exchange rates and a fairly low GTP hydrolysis rate. Plays a role in control of the cell cycle, stress response, ribosome biogenesis and in those bacteria that undergo differentiation, in morphogenesis control. The protein is GTPase Obg of Dehalococcoides mccartyi (strain ATCC BAA-2266 / KCTC 15142 / 195) (Dehalococcoides ethenogenes (strain 195)).